The chain runs to 310 residues: Putative S-adenosyl-L-methionine-dependent methyltransferase MMAR_0356 (310 aa).

S-adenosyl-L-methionine is bound by residues D137 and D166 to L167.

It belongs to the UPF0677 family.

Its function is as follows. Exhibits S-adenosyl-L-methionine-dependent methyltransferase activity. The sequence is that of Putative S-adenosyl-L-methionine-dependent methyltransferase MMAR_0356 from Mycobacterium marinum (strain ATCC BAA-535 / M).